Consider the following 167-residue polypeptide: Small ribosomal subunit protein mS25 (167 aa).

It belongs to the mitochondrion-specific ribosomal protein mS25 family. In terms of assembly, component of the mitochondrial ribosome small subunit (28S) which comprises a 12S rRNA and about 30 distinct proteins.

The protein resides in the mitochondrion. In Drosophila melanogaster (Fruit fly), this protein is Small ribosomal subunit protein mS25 (mRpS25).